Here is a 1130-residue protein sequence, read N- to C-terminus: Integrin alpha-6 (1130 aa).

Residues 1-23 (MAAAGQLCLLYLSAGLLSRLGAA) form the signal peptide. At 24-1050 (FNLDTREDNV…FPSKTVAQYS (1027 aa)) the chain is on the extracellular side. FG-GAP repeat units lie at residues 30 to 95 (EDNV…GPCT), 101 to 166 (NDAD…IEDD), 176 to 229 (DGRL…FFDM), 283 to 339 (EQPD…KSAH), 340 to 402 (LLPE…RWNN), 403 to 458 (VKPI…GINT), and 459 to 518 (KPTQ…VTPN). N78 carries an N-linked (GlcNAc...) asparagine glycan. Cystine bridges form between C86–C94, C131–C154, and C175–C188. N-linked (GlcNAc...) asparagine glycosylation is found at N223 and N323. Positions 363, 365, 367, and 371 each coordinate Ca(2+). A glycan (N-linked (GlcNAc...) asparagine) is linked at N409. D425, N427, D429, Y431, D433, D480, D482, N484, Y486, and D488 together coordinate Ca(2+). 4 cysteine pairs are disulfide-bonded: C528/C535, C541/C601, C665/C671, and C765/C776. N-linked (GlcNAc...) asparagine glycans are attached at residues N770, N787, N930, and N966. 2 cysteine pairs are disulfide-bonded: C920/C967 and C973/C978. N997 carries N-linked (GlcNAc...) asparagine glycosylation. The chain crosses the membrane as a helical span at residues 1051–1076 (GVPWWIILVAILAGILMLALLVFILW). Residues V1059 and G1064 each carry the phosphoserine modification. An interaction with HPS5 region spans residues 1077-1083 (KCGFFKR). At 1077–1130 (KCGFFKRSRYDDSVPRYHAVRIRKEEREIKDEKYIDNLEKKQWITKWNENESYS) the chain is on the cytoplasmic side. Residue C1078 is the site of S-palmitoyl cysteine; by DHHC3 attachment. Positions 1079 to 1083 (GFFKR) match the GFFKR motif motif. R1103 bears the Phosphoserine mark.

It belongs to the integrin alpha chain family. As to quaternary structure, heterodimer of an alpha and a beta subunit. The alpha subunit is composed of a heavy and a light chain linked by a disulfide bond. Alpha-6 associates with either beta-1 (ITGB1) or beta-4 (ITGB4) to form ITGA6:ITGB1 and ITGA6:ITGB4, respectively. ITGA6:ITGB1 is found in a complex with CD9; interaction takes place in oocytes and is involved in sperm-egg fusion. ITGA6:ITGB4 is found in a ternary complex with NRG1 and ERBB3. ITGA6:ITGB4 is found in a ternary complex with IGF1 and IGF1R. ITGA6:ITGB4 interacts with IGF2. Interacts with ADAM9. Interacts with RAB21. Interacts with MDK. ITGA6:ITGB1 interacts with MDK; this interaction mediates MDK-induced neurite outgrowth. Interacts with CD82; this interaction down-regulates ITGA6-mediated cell adhesion. Isoforms containing segment A, but not segment B, are the major targets for PMA-induced phosphorylation. Phosphorylation occurs on 'Ser-1103' of isoform alpha-6X1X2A. Phosphorylation is not required for the induction of integrin alpha-6A/beta-1 high affinity but may reduce the affinity for ligand. Post-translationally, undergoes PLAU-mediated cleavage at residues Arg-634-635-Arg in a time-dependent manner to produce processed integrin alpha-6 (alpha6p). Production of alpha6p enhances prostate cancer cell invasion and migration. In terms of processing, palmitoylation by DHHC3 enhances stability and cell surface expression. As to expression, integrin alpha-6/beta-4 is predominantly expressed by epithelia. Isoforms containing segment X1 are ubiquitously expressed. Isoforms containing segment X1X2 are expressed in heart, kidney, placenta, colon, duodenum, myoblasts and myotubes, and in a limited number of cell lines; they are always coexpressed with the ubiquitous isoform containing segment X1. In some tissues (e.g. Salivary gland), isoforms containing cytoplasmic segment A and isoforms containing segment B are detected while in others, only isoforms containing one cytoplasmic segment are found (segment A in epidermis and segment B in kidney). Processed integrin alpha-6: Expressed at low levels in normal prostate tissue with elevated levels in prostate cancer tissue (at protein level).

The protein resides in the cell membrane. Functionally, integrin alpha-6/beta-1 (ITGA6:ITGB1) is a receptor for laminin on platelets. Integrin alpha-6/beta-1 (ITGA6:ITGB1) is present in oocytes and is involved in sperm-egg fusion. Integrin alpha-6/beta-4 (ITGA6:ITGB4) is a receptor for laminin in epithelial cells and it plays a critical structural role in the hemidesmosome. ITGA6:ITGB4 binds to NRG1 (via EGF domain) and this binding is essential for NRG1-ERBB signaling. ITGA6:ITGB4 binds to IGF1 and this binding is essential for IGF1 signaling. ITGA6:ITGB4 binds to IGF2 and this binding is essential for IGF2 signaling. The protein is Integrin alpha-6 (ITGA6) of Homo sapiens (Human).